The following is a 320-amino-acid chain: MSFLNGTSLTPASFILNGIPGLEDVHLWISFPLCTMYSIAITGNFGLMYLIYCDEALHRPMYVFLALLSFTDVLMCTSTLPNTLFILWFNLKEIDFKACLAQMFFVHTFTGMESGVLMLMALDHCVAICFPLRYATILTNSVIAKAGFLTFLRGVMLVIPSTFLTKRLPYCKGNVIPHTYCDHMSVAKISCGNVRVNAIYGLIVALLIGGFDILCITISYTMILQAVVSLSSADARQKAFSTCTAHFCAIVLTYVPAFFTFFTHHFGGHTIPLHIHIIMANLYLLMPPTMNPIVYGVKTRQVRESVIRFFLKGKDNSHNF.

Residues 1–27 are Extracellular-facing; the sequence is MSFLNGTSLTPASFILNGIPGLEDVHL. N-linked (GlcNAc...) asparagine glycosylation occurs at Asn-5. The chain crosses the membrane as a helical span at residues 28-48; sequence WISFPLCTMYSIAITGNFGLM. The Cytoplasmic segment spans residues 49–56; sequence YLIYCDEA. A helical membrane pass occupies residues 57 to 77; sequence LHRPMYVFLALLSFTDVLMCT. Topologically, residues 78–101 are extracellular; that stretch reads STLPNTLFILWFNLKEIDFKACLA. A disulfide bridge connects residues Cys-99 and Cys-191. Residues 102 to 122 form a helical membrane-spanning segment; sequence QMFFVHTFTGMESGVLMLMAL. The Cytoplasmic segment spans residues 123–141; it reads DHCVAICFPLRYATILTNS. Residues 142–162 traverse the membrane as a helical segment; the sequence is VIAKAGFLTFLRGVMLVIPST. At 163–198 the chain is on the extracellular side; the sequence is FLTKRLPYCKGNVIPHTYCDHMSVAKISCGNVRVNA. The chain crosses the membrane as a helical span at residues 199–219; it reads IYGLIVALLIGGFDILCITIS. At 220–239 the chain is on the cytoplasmic side; sequence YTMILQAVVSLSSADARQKA. A helical transmembrane segment spans residues 240–260; that stretch reads FSTCTAHFCAIVLTYVPAFFT. Residues 261–276 are Extracellular-facing; sequence FFTHHFGGHTIPLHIH. A helical transmembrane segment spans residues 277–297; sequence IIMANLYLLMPPTMNPIVYGV. Topologically, residues 298 to 320 are cytoplasmic; it reads KTRQVRESVIRFFLKGKDNSHNF.

The protein belongs to the G-protein coupled receptor 1 family.

The protein localises to the cell membrane. Its function is as follows. Odorant receptor. The sequence is that of Olfactory receptor 52N1 (OR52N1) from Homo sapiens (Human).